The chain runs to 64 residues: Large ribosomal subunit protein bL35 (64 aa).

A compositionally biased stretch (basic residues) spans 1-42 (MPKAKTHSGASKRFRRTGTGKIVRQKANRRHLLEHKPTKRTR). Residues 1–64 (MPKAKTHSGA…NSRINKLLNG (64 aa)) form a disordered region. Residues 48–58 (TTVSAADNSRI) show a composition bias toward polar residues.

Belongs to the bacterial ribosomal protein bL35 family.

This is Large ribosomal subunit protein bL35 from Mycolicibacterium smegmatis (strain ATCC 700084 / mc(2)155) (Mycobacterium smegmatis).